A 156-amino-acid polypeptide reads, in one-letter code: ATP synthase subunit b (156 aa).

The chain crosses the membrane as a helical span at residues leucine 7–proline 27.

It belongs to the ATPase B chain family. As to quaternary structure, F-type ATPases have 2 components, F(1) - the catalytic core - and F(0) - the membrane proton channel. F(1) has five subunits: alpha(3), beta(3), gamma(1), delta(1), epsilon(1). F(0) has three main subunits: a(1), b(2) and c(10-14). The alpha and beta chains form an alternating ring which encloses part of the gamma chain. F(1) is attached to F(0) by a central stalk formed by the gamma and epsilon chains, while a peripheral stalk is formed by the delta and b chains.

It localises to the cell inner membrane. F(1)F(0) ATP synthase produces ATP from ADP in the presence of a proton or sodium gradient. F-type ATPases consist of two structural domains, F(1) containing the extramembraneous catalytic core and F(0) containing the membrane proton channel, linked together by a central stalk and a peripheral stalk. During catalysis, ATP synthesis in the catalytic domain of F(1) is coupled via a rotary mechanism of the central stalk subunits to proton translocation. Its function is as follows. Component of the F(0) channel, it forms part of the peripheral stalk, linking F(1) to F(0). The chain is ATP synthase subunit b from Neisseria gonorrhoeae (strain NCCP11945).